Reading from the N-terminus, the 1084-residue chain is Probable hemoglobin and hemoglobin-haptoglobin-binding protein 3 (1084 aa).

The signal sequence occupies residues 1-24 (MTNFKFSLLACSIAFALNASTVYA). Repeat copies occupy residues 26–29 (QPTN), 30–33 (QPTN), 34–37 (QPTN), 38–41 (QPTN), 42–45 (QPTN), 46–49 (QPTN), 50–53 (QPTN), 54–57 (QPTN), 58–61 (QPTN), 62–65 (QPTN), 66–69 (QPTN), and 70–73 (QPTN). The segment at 26-73 (QPTNQPTNQPTNQPTNQPTNQPTNQPTNQPTNQPTNQPTNQPTNQPTN) is 12 X 4 AA tandem repeats of Q-P-T-N. Low complexity predominate over residues 26 to 75 (QPTNQPTNQPTNQPTNQPTNQPTNQPTNQPTNQPTNQPTNQPTNQPTNQN). Residues 26–77 (QPTNQPTNQPTNQPTNQPTNQPTNQPTNQPTNQPTNQPTNQPTNQPTNQNSN) form a disordered region. Positions 83–90 (EQINVSGS) match the TonB box motif. In terms of domain architecture, TBDR plug spans 95-220 (NIKEKKVGET…LGGSVIFETK (126 aa)). Positions 228–1084 (DKDYYLSYKR…NYRMSVQFEF (857 aa)) constitute a TBDR beta-barrel domain. The TonB C-terminal box motif lies at 1067–1084 (NRFYAPGRNYRMSVQFEF).

The protein belongs to the TonB-dependent receptor family. Hemoglobin/haptoglobin binding protein subfamily.

It is found in the cell outer membrane. Functionally, acts as a receptor for hemoglobin or the hemoglobin/haptoglobin complex of the human host and is required for heme uptake. This Haemophilus influenzae (strain ATCC 51907 / DSM 11121 / KW20 / Rd) protein is Probable hemoglobin and hemoglobin-haptoglobin-binding protein 3.